The primary structure comprises 145 residues: Galectin-5 (145 aa).

S2 bears the N-acetylserine mark. The Galectin domain occupies 17 to 145 (FFTSIPNGLY…GDIQLTHVET (129 aa)). A beta-D-galactoside is bound at residue 77 to 83 (WGPEERS).

Monomer. Erythrocytes.

Its function is as follows. May function in erythrocyte differentiation. The polypeptide is Galectin-5 (Lgals5) (Rattus norvegicus (Rat)).